Reading from the N-terminus, the 61-residue chain is Chi-conotoxin MrIA (61 aa).

A signal peptide spans 1–19 (MRCLPVLIILLLLTASAPG). The propeptide occupies 20–48 (VVVLPKTEDDVPMSSVYGNGKSILRGILR). 2 disulfides stabilise this stretch: C52–C61 and C53–C58. P60 is modified (4-hydroxyproline).

Belongs to the conotoxin T superfamily. In terms of tissue distribution, expressed by the venom duct.

It is found in the secreted. Functionally, chi-conotoxins inhibit the neuronal noradrenaline transporter (NET/SLC6A2). Activity has been described on both human (inhibition of norepinephrine uptake is IC(50)=1.26 uM) and rat (pIC(50)=6.21 corresponding IC(50)=0.16 uM) transporters. Acts as a reversible non-competitive inhibitor. This is Chi-conotoxin MrIA from Conus marmoreus (Marble cone).